Reading from the N-terminus, the 651-residue chain is Beta-glucuronidase (651 aa).

The signal sequence occupies residues 1–22 (MARGSAVAWAAFGPLLWGCALG). N-linked (GlcNAc...) asparagine glycosylation is found at asparagine 173, asparagine 190, asparagine 272, and asparagine 420. Catalysis depends on glutamate 451, which acts as the Proton donor. A glycan (N-linked (GlcNAc...) asparagine) is linked at asparagine 631.

Belongs to the glycosyl hydrolase 2 family. In terms of assembly, homotetramer.

It localises to the lysosome. It carries out the reaction a beta-D-glucuronoside + H2O = D-glucuronate + an alcohol. With respect to regulation, inhibited by L-aspartic acid. In terms of biological role, plays an important role in the degradation of dermatan and keratan sulfates. This chain is Beta-glucuronidase (GUSB), found in Pongo abelii (Sumatran orangutan).